The following is a 255-amino-acid chain: MSDYVVVKCGGSMLDQLNDVFFDCIKKLQQKYKVVIVHGGGPEIDAQLKDCNINVEKRDGLRVTPKEVMDVVQMVLCGSTNKKLVMNLQKHNLRAVGCSGCDGNLLQVQPVSEEIGYVGEVRYVETALLKGLINMNYIPVIAPVGINDNEIYNINADTAAAGIAAALSAKELIFITDVDGVLHEGKLVKKTDEFEIVNFIENGVITGGMIPKVQAAIASLKMGVQKVSIVNGMKDFTEVTGECIGTTVTRGVSIA.

Residues 40-41 (GG), Arg62, and Asn153 contribute to the substrate site.

It belongs to the acetylglutamate kinase family. ArgB subfamily.

It localises to the cytoplasm. It carries out the reaction N-acetyl-L-glutamate + ATP = N-acetyl-L-glutamyl 5-phosphate + ADP. The protein operates within amino-acid biosynthesis; L-arginine biosynthesis; N(2)-acetyl-L-ornithine from L-glutamate: step 2/4. Its function is as follows. Catalyzes the ATP-dependent phosphorylation of N-acetyl-L-glutamate. This Bacillus cereus (strain ZK / E33L) protein is Acetylglutamate kinase.